The following is a 107-amino-acid chain: Iron-sulfur cluster assembly protein CyaY (107 aa).

The protein belongs to the frataxin family.

Its function is as follows. Involved in iron-sulfur (Fe-S) cluster assembly. May act as a regulator of Fe-S biogenesis. In Yersinia intermedia, this protein is Iron-sulfur cluster assembly protein CyaY.